Reading from the N-terminus, the 65-residue chain is Large ribosomal subunit protein bL35 (65 aa).

Residues 1–16 (MVPKQKTHSGAKKRFK) show a composition bias toward basic residues. The segment at 1 to 39 (MVPKQKTHSGAKKRFKLTGSGSVSRARAGMRHNFEHRSS) is disordered.

It belongs to the bacterial ribosomal protein bL35 family.

This Tropheryma whipplei (strain TW08/27) (Whipple's bacillus) protein is Large ribosomal subunit protein bL35.